Reading from the N-terminus, the 163-residue chain is Nucleotide-binding protein HS_0688 (163 aa).

It belongs to the YajQ family.

Its function is as follows. Nucleotide-binding protein. The sequence is that of Nucleotide-binding protein HS_0688 from Histophilus somni (strain 129Pt) (Haemophilus somnus).